A 479-amino-acid polypeptide reads, in one-letter code: Lincomycin resistance protein LmrB (479 aa).

A run of 14 helical transmembrane segments spans residues 19 to 41, 56 to 78, 85 to 107, 112 to 134, 141 to 160, 170 to 192, 205 to 222, 232 to 251, 272 to 294, 304 to 326, 338 to 355, 360 to 382, 403 to 425, and 449 to 471; these read MISL…IALT, WLTT…LLQW, FTVS…SFSF, RIVQ…LVIF, AAMG…GPTF, WHWI…IAYM, VLSI…VFGF, WSSP…LILF, MFIL…MLLL, LTAF…MSPV, WLVI…WFFS, TSTA…MIMM, IMNT…IMAA, and AGVQ…GAFF.

This sequence belongs to the major facilitator superfamily. EmrB family.

The protein localises to the cell membrane. In terms of biological role, proton-dependent transporter. May mediate the efflux of lincomycin. The polypeptide is Lincomycin resistance protein LmrB (lmrB) (Bacillus subtilis (strain 168)).